Here is a 427-residue protein sequence, read N- to C-terminus: Dihydroorotase (427 aa).

Zn(2+) contacts are provided by histidine 58 and histidine 60. Substrate contacts are provided by residues 60–62 (HLR) and asparagine 92. The Zn(2+) site is built by aspartate 150, histidine 177, and histidine 230. Asparagine 276 serves as a coordination point for substrate. Aspartate 303 contributes to the Zn(2+) binding site. Aspartate 303 is a catalytic residue. Residues histidine 307 and 321-322 (FG) each bind substrate.

The protein belongs to the metallo-dependent hydrolases superfamily. DHOase family. Class I DHOase subfamily. Zn(2+) is required as a cofactor.

It catalyses the reaction (S)-dihydroorotate + H2O = N-carbamoyl-L-aspartate + H(+). Its pathway is pyrimidine metabolism; UMP biosynthesis via de novo pathway; (S)-dihydroorotate from bicarbonate: step 3/3. Functionally, catalyzes the reversible cyclization of carbamoyl aspartate to dihydroorotate. The chain is Dihydroorotase from Macrococcus caseolyticus (strain JCSC5402) (Macrococcoides caseolyticum).